We begin with the raw amino-acid sequence, 736 residues long: Phosphoribosylformylglycinamidine synthase subunit PurL (736 aa).

Residue His-49 is part of the active site. 2 residues coordinate ATP: Tyr-52 and Lys-91. Glu-93 provides a ligand contact to Mg(2+). Residues 94–97 (SHNH) and Arg-116 each bind substrate. Catalysis depends on His-95, which acts as the Proton acceptor. Residue Asp-117 participates in Mg(2+) binding. Gln-240 is a substrate binding site. Residue Asp-268 coordinates Mg(2+). 312–314 (ESQ) provides a ligand contact to substrate. Residues Asp-493 and Gly-530 each coordinate ATP. Asn-531 is a Mg(2+) binding site. Substrate is bound at residue Ser-533.

The protein belongs to the FGAMS family. Monomer. Part of the FGAM synthase complex composed of 1 PurL, 1 PurQ and 2 PurS subunits.

It is found in the cytoplasm. The catalysed reaction is N(2)-formyl-N(1)-(5-phospho-beta-D-ribosyl)glycinamide + L-glutamine + ATP + H2O = 2-formamido-N(1)-(5-O-phospho-beta-D-ribosyl)acetamidine + L-glutamate + ADP + phosphate + H(+). It functions in the pathway purine metabolism; IMP biosynthesis via de novo pathway; 5-amino-1-(5-phospho-D-ribosyl)imidazole from N(2)-formyl-N(1)-(5-phospho-D-ribosyl)glycinamide: step 1/2. Its function is as follows. Part of the phosphoribosylformylglycinamidine synthase complex involved in the purines biosynthetic pathway. Catalyzes the ATP-dependent conversion of formylglycinamide ribonucleotide (FGAR) and glutamine to yield formylglycinamidine ribonucleotide (FGAM) and glutamate. The FGAM synthase complex is composed of three subunits. PurQ produces an ammonia molecule by converting glutamine to glutamate. PurL transfers the ammonia molecule to FGAR to form FGAM in an ATP-dependent manner. PurS interacts with PurQ and PurL and is thought to assist in the transfer of the ammonia molecule from PurQ to PurL. This Rhodopseudomonas palustris (strain BisB18) protein is Phosphoribosylformylglycinamidine synthase subunit PurL.